The primary structure comprises 943 residues: Isoleucine--tRNA ligase (943 aa).

A 'HIGH' region motif is present at residues 58–68 (PYANGSIHIGH). E567 is a binding site for L-isoleucyl-5'-AMP. Positions 608–612 (KMSKS) match the 'KMSKS' region motif. K611 contributes to the ATP binding site. 4 residues coordinate Zn(2+): C906, C909, C926, and C929.

It belongs to the class-I aminoacyl-tRNA synthetase family. IleS type 1 subfamily. In terms of assembly, monomer. It depends on Zn(2+) as a cofactor.

It localises to the cytoplasm. It catalyses the reaction tRNA(Ile) + L-isoleucine + ATP = L-isoleucyl-tRNA(Ile) + AMP + diphosphate. Catalyzes the attachment of isoleucine to tRNA(Ile). As IleRS can inadvertently accommodate and process structurally similar amino acids such as valine, to avoid such errors it has two additional distinct tRNA(Ile)-dependent editing activities. One activity is designated as 'pretransfer' editing and involves the hydrolysis of activated Val-AMP. The other activity is designated 'posttransfer' editing and involves deacylation of mischarged Val-tRNA(Ile). The sequence is that of Isoleucine--tRNA ligase from Pseudomonas aeruginosa (strain ATCC 15692 / DSM 22644 / CIP 104116 / JCM 14847 / LMG 12228 / 1C / PRS 101 / PAO1).